Consider the following 132-residue polypeptide: Acid shock protein (132 aa).

A signal peptide spans 1–21 (MKKVLALVVAAAMGLSSAAFA). Positions 20-45 (FAAETTTSSAAPATATATTTKAAPAK) are enriched in low complexity. Residues 20 to 132 (FAAETTTSSA…AAKPAAQPAA (113 aa)) form a disordered region. Positions 22–90 (AETTTSSAAP…TTAPVEQKAQ (69 aa)) are excised as a propeptide. A compositionally biased stretch (basic residues) spans 62 to 71 (AAKKHHKKAV). Low complexity-rich tracts occupy residues 76 to 90 (AAPA…QKAQ) and 100 to 109 (AKPAVAQKAQ). The span at 110 to 119 (AAKKHHKKAV) shows a compositional bias: basic residues.

It belongs to the Asr family. Proteolytic processing gives rise to the active protein.

Its subcellular location is the periplasm. Functionally, required for growth and/or survival at acidic conditions. This chain is Acid shock protein, found in Enterobacter sp. (strain 638).